The primary structure comprises 113 residues: Protein translation factor SUI1 homolog (113 aa).

The tract at residues 1 to 24 is disordered; it reads MSELDSQVPTAFDPFADANAEDSG. S2 is subject to N-acetylserine.

It belongs to the SUI1 family.

Functionally, probably involved in translation. In Brassica oleracea (Wild cabbage), this protein is Protein translation factor SUI1 homolog.